A 371-amino-acid chain; its full sequence is Ferrochelatase (371 aa).

His-218 and Glu-299 together coordinate Fe cation.

The protein belongs to the ferrochelatase family.

The protein resides in the cytoplasm. It catalyses the reaction heme b + 2 H(+) = protoporphyrin IX + Fe(2+). It participates in porphyrin-containing compound metabolism; protoheme biosynthesis; protoheme from protoporphyrin-IX: step 1/1. In terms of biological role, catalyzes the ferrous insertion into protoporphyrin IX. In Ralstonia nicotianae (strain ATCC BAA-1114 / GMI1000) (Ralstonia solanacearum), this protein is Ferrochelatase.